We begin with the raw amino-acid sequence, 336 residues long: NADH-quinone oxidoreductase subunit H (336 aa).

Helical transmembrane passes span Leu9 to Ala29, Phe77 to Phe97, Leu116 to Gly136, Ile156 to Leu176, Leu188 to Leu208, Ile236 to Met256, Ile275 to Ile295, and Val315 to Ile335.

Belongs to the complex I subunit 1 family. As to quaternary structure, NDH-1 is composed of 14 different subunits. Subunits NuoA, H, J, K, L, M, N constitute the membrane sector of the complex.

The protein resides in the cell inner membrane. The catalysed reaction is a quinone + NADH + 5 H(+)(in) = a quinol + NAD(+) + 4 H(+)(out). NDH-1 shuttles electrons from NADH, via FMN and iron-sulfur (Fe-S) centers, to quinones in the respiratory chain. The immediate electron acceptor for the enzyme in this species is believed to be ubiquinone. Couples the redox reaction to proton translocation (for every two electrons transferred, four hydrogen ions are translocated across the cytoplasmic membrane), and thus conserves the redox energy in a proton gradient. This subunit may bind ubiquinone. This is NADH-quinone oxidoreductase subunit H from Neorickettsia sennetsu (strain ATCC VR-367 / Miyayama) (Ehrlichia sennetsu).